The sequence spans 240 residues: 2,3,4,5-tetrahydropyridine-2,6-dicarboxylate N-acetyltransferase (240 aa).

Belongs to the transferase hexapeptide repeat family. DapH subfamily.

It catalyses the reaction (S)-2,3,4,5-tetrahydrodipicolinate + acetyl-CoA + H2O = L-2-acetamido-6-oxoheptanedioate + CoA. The protein operates within amino-acid biosynthesis; L-lysine biosynthesis via DAP pathway; LL-2,6-diaminopimelate from (S)-tetrahydrodipicolinate (acetylase route): step 1/3. Functionally, catalyzes the transfer of an acetyl group from acetyl-CoA to tetrahydrodipicolinate. This Bacillus cereus (strain G9842) protein is 2,3,4,5-tetrahydropyridine-2,6-dicarboxylate N-acetyltransferase.